The following is a 222-amino-acid chain: V-type ATP synthase subunit D (222 aa).

This sequence belongs to the V-ATPase D subunit family.

In terms of biological role, produces ATP from ADP in the presence of a proton gradient across the membrane. This Deinococcus geothermalis (strain DSM 11300 / CIP 105573 / AG-3a) protein is V-type ATP synthase subunit D.